Consider the following 140-residue polypeptide: Ribosome maturation factor RimP (140 aa).

The protein belongs to the RimP family.

The protein resides in the cytoplasm. Its function is as follows. Required for maturation of 30S ribosomal subunits. The polypeptide is Ribosome maturation factor RimP (Campylobacter lari (strain RM2100 / D67 / ATCC BAA-1060)).